A 303-amino-acid polypeptide reads, in one-letter code: Protoheme IX farnesyltransferase 2 (303 aa).

9 helical membrane passes run 29-49, 51-71, 96-118, 123-143, 150-170, 177-197, 223-243, 244-264, and 281-301; these read VVALMLLTVLVGMCLSVPGIV, LQPLVAGMAGIAMMAGSAAAF, ISTTKAVTFAVSLGSLGFVVLYT, LTAWLTFASLIGYALVYTAYL, NIVIGGLAGAMPPLLGWTAIT, ALLLVIIIFTWTPPHFWALAI, CILLYTILLAIACLLPVLVGM, CGPIYLVGSTVLSCGFIYKAW, and FSIYHLMVLFIVLLVDHYFWV.

Belongs to the UbiA prenyltransferase family. Protoheme IX farnesyltransferase subfamily.

The protein localises to the cell inner membrane. It carries out the reaction heme b + (2E,6E)-farnesyl diphosphate + H2O = Fe(II)-heme o + diphosphate. It participates in porphyrin-containing compound metabolism; heme O biosynthesis; heme O from protoheme: step 1/1. Functionally, converts heme B (protoheme IX) to heme O by substitution of the vinyl group on carbon 2 of heme B porphyrin ring with a hydroxyethyl farnesyl side group. In Shewanella frigidimarina (strain NCIMB 400), this protein is Protoheme IX farnesyltransferase 2.